The chain runs to 433 residues: Pyrimidine-nucleoside phosphorylase (433 aa).

Residue 81–83 (KHS) participates in phosphate binding. K(+)-binding residues include Gly88 and Thr90. Phosphate is bound by residues Thr92, 108 to 110 (KMS), and Thr120. Substrate-binding residues include Arg168 and Lys187. The K(+) site is built by Leu243, Ala246, and Glu255.

This sequence belongs to the thymidine/pyrimidine-nucleoside phosphorylase family. As to quaternary structure, homodimer. K(+) serves as cofactor.

The enzyme catalyses uridine + phosphate = alpha-D-ribose 1-phosphate + uracil. It carries out the reaction thymidine + phosphate = 2-deoxy-alpha-D-ribose 1-phosphate + thymine. It catalyses the reaction 2'-deoxyuridine + phosphate = 2-deoxy-alpha-D-ribose 1-phosphate + uracil. Functionally, catalyzes phosphorolysis of the pyrimidine nucleosides uridine, thymidine and 2'-deoxyuridine with the formation of the corresponding pyrimidine base and ribose-1-phosphate. The protein is Pyrimidine-nucleoside phosphorylase of Bacillus subtilis (strain 168).